We begin with the raw amino-acid sequence, 248 residues long: Probable transcriptional regulatory protein RPD_4171 (248 aa).

The disordered stretch occupies residues 1–22; the sequence is MAGHSQFKNIMHRKGKQDAQRS.

The protein belongs to the TACO1 family.

It is found in the cytoplasm. The polypeptide is Probable transcriptional regulatory protein RPD_4171 (Rhodopseudomonas palustris (strain BisB5)).